Reading from the N-terminus, the 473-residue chain is Cysteine--tRNA ligase (473 aa).

Cysteine 28 lines the Zn(2+) pocket. A 'HIGH' region motif is present at residues 30-40 (PTVYNYIHIGN). 3 residues coordinate Zn(2+): cysteine 210, histidine 235, and glutamate 239. A 'KMSKS' region motif is present at residues 267 to 271 (KMSKS). Lysine 270 contacts ATP.

Belongs to the class-I aminoacyl-tRNA synthetase family. In terms of assembly, monomer. Zn(2+) is required as a cofactor.

It is found in the cytoplasm. The catalysed reaction is tRNA(Cys) + L-cysteine + ATP = L-cysteinyl-tRNA(Cys) + AMP + diphosphate. This is Cysteine--tRNA ligase from Fusobacterium nucleatum subsp. nucleatum (strain ATCC 25586 / DSM 15643 / BCRC 10681 / CIP 101130 / JCM 8532 / KCTC 2640 / LMG 13131 / VPI 4355).